Reading from the N-terminus, the 456-residue chain is Probable tRNA(Ile)-lysidine synthase (456 aa).

30–35 (SGGVDS) contacts ATP.

The protein belongs to the tRNA(Ile)-lysidine synthase family.

The protein localises to the cytoplasm. It carries out the reaction cytidine(34) in tRNA(Ile2) + L-lysine + ATP = lysidine(34) in tRNA(Ile2) + AMP + diphosphate + H(+). Its function is as follows. Ligates lysine onto the cytidine present at position 34 of the AUA codon-specific tRNA(Ile) that contains the anticodon CAU, in an ATP-dependent manner. Cytidine is converted to lysidine, thus changing the amino acid specificity of the tRNA from methionine to isoleucine. This Schizosaccharomyces pombe (strain 972 / ATCC 24843) (Fission yeast) protein is Probable tRNA(Ile)-lysidine synthase.